Consider the following 157-residue polypeptide: Crossover junction endodeoxyribonuclease RuvC (157 aa).

Catalysis depends on residues aspartate 7, glutamate 67, and aspartate 140. Aspartate 7, glutamate 67, and aspartate 140 together coordinate Mg(2+).

It belongs to the RuvC family. As to quaternary structure, homodimer which binds Holliday junction (HJ) DNA. The HJ becomes 2-fold symmetrical on binding to RuvC with unstacked arms; it has a different conformation from HJ DNA in complex with RuvA. In the full resolvosome a probable DNA-RuvA(4)-RuvB(12)-RuvC(2) complex forms which resolves the HJ. The cofactor is Mg(2+).

It localises to the cytoplasm. The catalysed reaction is Endonucleolytic cleavage at a junction such as a reciprocal single-stranded crossover between two homologous DNA duplexes (Holliday junction).. Its function is as follows. The RuvA-RuvB-RuvC complex processes Holliday junction (HJ) DNA during genetic recombination and DNA repair. Endonuclease that resolves HJ intermediates. Cleaves cruciform DNA by making single-stranded nicks across the HJ at symmetrical positions within the homologous arms, yielding a 5'-phosphate and a 3'-hydroxyl group; requires a central core of homology in the junction. The consensus cleavage sequence is 5'-(A/T)TT(C/G)-3'. Cleavage occurs on the 3'-side of the TT dinucleotide at the point of strand exchange. HJ branch migration catalyzed by RuvA-RuvB allows RuvC to scan DNA until it finds its consensus sequence, where it cleaves and resolves the cruciform DNA. This chain is Crossover junction endodeoxyribonuclease RuvC, found in Rickettsia conorii (strain ATCC VR-613 / Malish 7).